The primary structure comprises 260 residues: Exosome complex component Rrp42 (260 aa).

This sequence belongs to the RNase PH family. Rrp42 subfamily. In terms of assembly, component of the archaeal exosome complex. Forms a hexameric ring-like arrangement composed of 3 Rrp41-Rrp42 heterodimers. The hexameric ring associates with a trimer of Rrp4 and/or Csl4 subunits.

It is found in the cytoplasm. Its function is as follows. Non-catalytic component of the exosome, which is a complex involved in RNA degradation. Contributes to the structuring of the Rrp41 active site. The polypeptide is Exosome complex component Rrp42 (Methanocella arvoryzae (strain DSM 22066 / NBRC 105507 / MRE50)).